The primary structure comprises 181 residues: Kappa-casein (181 aa).

Positions 1–21 are cleaved as a signal peptide; sequence MMRNFIVVVNILALTLPFLAA. Residue T123 is modified to Phosphothreonine. O-linked (GalNAc...) threonine glycans are attached at residues T134, T144, and T155. The residue at position 162 (S162) is a Phosphoserine; alternate. O-linked (GalNAc...) serine; alternate glycosylation occurs at S162. S178 is modified (phosphoserine).

The protein belongs to the kappa-casein family. Mammary gland specific. Secreted in milk.

It is found in the secreted. Its function is as follows. Kappa-casein stabilizes micelle formation, preventing casein precipitation in milk. In Mus musculus (Mouse), this protein is Kappa-casein (Csn3).